The chain runs to 254 residues: Flavin-dependent thymidylate synthase (254 aa).

Positions 7 to 237 (LRVQLIARTE…PAVFADFEIY (231 aa)) constitute a ThyX domain. Residues Ser-71, 95-97 (RHR), and Gln-103 each bind FAD. Residues 92 to 95 (ELIR), 103 to 107 (QLSQR), and Arg-176 contribute to the dUMP site. A ThyX motif motif is present at residues 95–105 (RHRHFSYSQLS). FAD contacts are provided by residues 192–194 (NYR) and His-198. Arg-203 is a dUMP binding site. Arg-203 serves as the catalytic Involved in ionization of N3 of dUMP, leading to its activation.

The protein belongs to the thymidylate synthase ThyX family. As to quaternary structure, homotetramer. It depends on FAD as a cofactor.

It catalyses the reaction dUMP + (6R)-5,10-methylene-5,6,7,8-tetrahydrofolate + NADPH + H(+) = dTMP + (6S)-5,6,7,8-tetrahydrofolate + NADP(+). The protein operates within pyrimidine metabolism; dTTP biosynthesis. In terms of biological role, catalyzes the reductive methylation of 2'-deoxyuridine-5'-monophosphate (dUMP) to 2'-deoxythymidine-5'-monophosphate (dTMP) while utilizing 5,10-methylenetetrahydrofolate (mTHF) as the methyl donor, and NADPH and FADH(2) as the reductant. The polypeptide is Flavin-dependent thymidylate synthase (Mycobacterium sp. (strain KMS)).